The sequence spans 445 residues: Putative MgpC-like protein MPN_464 (445 aa).

Residues 23–44 (STTVAVQKSDSSGSQGQGTTDN) are disordered. A compositionally biased stretch (low complexity) spans 31–43 (SDSSGSQGQGTTD).

The protein belongs to the MgpC family.

In Mycoplasma pneumoniae (strain ATCC 29342 / M129 / Subtype 1) (Mycoplasmoides pneumoniae), this protein is Putative MgpC-like protein MPN_464.